The primary structure comprises 176 residues: Crossover junction endodeoxyribonuclease RuvC (176 aa).

Active-site residues include aspartate 7, glutamate 67, and aspartate 139. Mg(2+) is bound by residues aspartate 7, glutamate 67, and aspartate 139.

It belongs to the RuvC family. In terms of assembly, homodimer which binds Holliday junction (HJ) DNA. The HJ becomes 2-fold symmetrical on binding to RuvC with unstacked arms; it has a different conformation from HJ DNA in complex with RuvA. In the full resolvosome a probable DNA-RuvA(4)-RuvB(12)-RuvC(2) complex forms which resolves the HJ. Requires Mg(2+) as cofactor.

It localises to the cytoplasm. The catalysed reaction is Endonucleolytic cleavage at a junction such as a reciprocal single-stranded crossover between two homologous DNA duplexes (Holliday junction).. The RuvA-RuvB-RuvC complex processes Holliday junction (HJ) DNA during genetic recombination and DNA repair. Endonuclease that resolves HJ intermediates. Cleaves cruciform DNA by making single-stranded nicks across the HJ at symmetrical positions within the homologous arms, yielding a 5'-phosphate and a 3'-hydroxyl group; requires a central core of homology in the junction. The consensus cleavage sequence is 5'-(A/T)TT(C/G)-3'. Cleavage occurs on the 3'-side of the TT dinucleotide at the point of strand exchange. HJ branch migration catalyzed by RuvA-RuvB allows RuvC to scan DNA until it finds its consensus sequence, where it cleaves and resolves the cruciform DNA. The protein is Crossover junction endodeoxyribonuclease RuvC of Pelobacter propionicus (strain DSM 2379 / NBRC 103807 / OttBd1).